Here is a 634-residue protein sequence, read N- to C-terminus: MSMLKNLKSPAELKGLSVKELEVLAGEIRTKIIDTVSQTGGHLASSLGVVELTIALHHVLNTPVDKIVWDVGHQAYAHKLLTGRLDRFDTLRQLGGISGFPKREESPYDAFDVGHSSTSISAALGMAAARDCKNGKEKFVAVIGDGSLTGGMAFEALNQAGDQNKNLIVILNDNEMSISQNVGALSSLINRKMTSELVVRLKKEAENFLGHVPRIGKDLLKVARKAEESLKGFFTPGMLFEAFGFDYVGPLNGHRLETLIPALENVANLEGPVLVHVVTRKGKGFEPAEKNPSLFHGVGPFDKETGEVRASKGGPASFTGVFGSTLTAMAEKDDRIVAITAAMLEGTGLKEFSKRYPSRFFDVGIAEQHAVTFAAGLACQGMRPVVALYSTFLQRAYDNVVHDVALQRLPVTFAIDRGGLVGADGPTHHGVFDYSFLRHIPNMVVIAPRDEIELQRAMLTGTQHDGPLAYRYPRGKALGLELPDSVESMPIGKGEKLRDGSDAVIFALGVVCKEALVASDILAGEGLSVAVVDPRFLKPLDQQLLIAEARRTGVVVTVEENVRQGGFGSAVLEMLADEGLAVRVLRIGLPDRFIEQGTQQQLYARYGLDAEGIAASVRNFMHHDRGDASSTALA.

Thiamine diphosphate-binding positions include His73 and 114 to 116 (GHS). Asp145 lines the Mg(2+) pocket. Residues 146 to 147 (GS), Asn174, Phe285, and Glu367 each bind thiamine diphosphate. Residue Asn174 coordinates Mg(2+).

This sequence belongs to the transketolase family. DXPS subfamily. As to quaternary structure, homodimer. Requires Mg(2+) as cofactor. It depends on thiamine diphosphate as a cofactor.

The enzyme catalyses D-glyceraldehyde 3-phosphate + pyruvate + H(+) = 1-deoxy-D-xylulose 5-phosphate + CO2. It functions in the pathway metabolic intermediate biosynthesis; 1-deoxy-D-xylulose 5-phosphate biosynthesis; 1-deoxy-D-xylulose 5-phosphate from D-glyceraldehyde 3-phosphate and pyruvate: step 1/1. Functionally, catalyzes the acyloin condensation reaction between C atoms 2 and 3 of pyruvate and glyceraldehyde 3-phosphate to yield 1-deoxy-D-xylulose-5-phosphate (DXP). The protein is 1-deoxy-D-xylulose-5-phosphate synthase of Syntrophotalea carbinolica (strain DSM 2380 / NBRC 103641 / GraBd1) (Pelobacter carbinolicus).